Reading from the N-terminus, the 375-residue chain is Chaperone protein DnaJ (375 aa).

The J domain occupies 5-70 (DYYDVLGVNR…QKRGAYDQFG (66 aa)). The CR-type zinc-finger motif lies at 135 to 213 (GCEKQIRIPS…CHGAGQKKTT (79 aa)). 8 residues coordinate Zn(2+): C148, C151, C165, C168, C187, C190, C201, and C204. CXXCXGXG motif repeat units lie at residues 148 to 155 (CSTCNGTG), 165 to 172 (CATCGGHG), 187 to 194 (CPTCHGTG), and 201 to 208 (CGSCHGAG).

Belongs to the DnaJ family. Homodimer. It depends on Zn(2+) as a cofactor.

It localises to the cytoplasm. Its function is as follows. Participates actively in the response to hyperosmotic and heat shock by preventing the aggregation of stress-denatured proteins and by disaggregating proteins, also in an autonomous, DnaK-independent fashion. Unfolded proteins bind initially to DnaJ; upon interaction with the DnaJ-bound protein, DnaK hydrolyzes its bound ATP, resulting in the formation of a stable complex. GrpE releases ADP from DnaK; ATP binding to DnaK triggers the release of the substrate protein, thus completing the reaction cycle. Several rounds of ATP-dependent interactions between DnaJ, DnaK and GrpE are required for fully efficient folding. Also involved, together with DnaK and GrpE, in the DNA replication of plasmids through activation of initiation proteins. This Chromobacterium violaceum (strain ATCC 12472 / DSM 30191 / JCM 1249 / CCUG 213 / NBRC 12614 / NCIMB 9131 / NCTC 9757 / MK) protein is Chaperone protein DnaJ.